Reading from the N-terminus, the 188-residue chain is Probable DNA-directed RNA polymerase subunit delta (188 aa).

One can recognise an HTH HARE-type domain in the interval 14–83 (LSMIEVARAI…GENKWGLRSW (70 aa)). The tract at residues 119–188 (EDAIDYSADD…EDEEDEEEEE (70 aa)) is disordered.

Belongs to the RpoE family. In terms of assembly, RNAP is composed of a core of 2 alpha, a beta and a beta' subunits. The core is associated with a delta subunit and one of several sigma factors.

Its function is as follows. Participates in both the initiation and recycling phases of transcription. In the presence of the delta subunit, RNAP displays an increased specificity of transcription, a decreased affinity for nucleic acids, and an increased efficiency of RNA synthesis because of enhanced recycling. This is Probable DNA-directed RNA polymerase subunit delta from Streptococcus equi subsp. equi (strain 4047).